Here is a 261-residue protein sequence, read N- to C-terminus: MALLQLERIGAQYPGAAAPVLADINLSLGPQQLLVALGPSGSGKTSLLNLIAGFIKPGSGRITLDGIPVEGPSAERGVVFQDDALLPWQNVLANVAFGLELAGVGRLERETRAREMLALVDLAGFDQRRIWQLSGGQRQRVGLARALAADPRILLMDEPFGALDAFTREQMQELLLQVWQRTAKPVFLITHDIEEAVFLATDLVLLAPNPGRIAEHLHLDFGRRYAAGESARAIKSDPRFIETREHVLASVFSQRTREQCV.

One can recognise an ABC transporter domain in the interval 4–233; sequence LQLERIGAQY…RYAAGESARA (230 aa). An ATP-binding site is contributed by 38-45; that stretch reads GPSGSGKT.

This sequence belongs to the ABC transporter superfamily. Taurine importer (TC 3.A.1.17.1) family. In terms of assembly, the complex is composed of two ATP-binding proteins (TauB), two transmembrane proteins (TauC) and a solute-binding protein (TauA).

The protein localises to the cell inner membrane. It catalyses the reaction taurine(out) + ATP + H2O = taurine(in) + ADP + phosphate + H(+). Part of the ABC transporter complex TauABC involved in taurine import. Responsible for energy coupling to the transport system. This is Taurine import ATP-binding protein TauB from Pseudomonas savastanoi pv. phaseolicola (strain 1448A / Race 6) (Pseudomonas syringae pv. phaseolicola (strain 1448A / Race 6)).